We begin with the raw amino-acid sequence, 340 residues long: Protein-arginine kinase (340 aa).

Residues 21–242 (VVLSSRIRLA…EQIIMQERVA (222 aa)) enclose the Phosphagen kinase C-terminal domain. Residues 24–28 (SSRIR), His-79, Arg-113, 164–168 (RASVM), and 195–200 (RGIYGE) contribute to the ATP site.

It belongs to the ATP:guanido phosphotransferase family.

It catalyses the reaction L-arginyl-[protein] + ATP = N(omega)-phospho-L-arginyl-[protein] + ADP + H(+). Catalyzes the specific phosphorylation of arginine residues in proteins. This Listeria monocytogenes serovar 1/2a (strain ATCC BAA-679 / EGD-e) protein is Protein-arginine kinase.